Reading from the N-terminus, the 224-residue chain is Ribonuclease T (224 aa).

The Exonuclease domain maps to 32–206 (VVVDVETGGF…YDTEKTAELF (175 aa)). Positions 35, 37, 193, and 198 each coordinate Mg(2+). The Proton donor/acceptor role is filled by histidine 193.

The protein belongs to the RNase T family. In terms of assembly, homodimer. Requires Mg(2+) as cofactor.

In terms of biological role, trims short 3' overhangs of a variety of RNA species, leaving a one or two nucleotide 3' overhang. Responsible for the end-turnover of tRNA: specifically removes the terminal AMP residue from uncharged tRNA (tRNA-C-C-A). Also appears to be involved in tRNA biosynthesis. This chain is Ribonuclease T, found in Pseudomonas aeruginosa (strain UCBPP-PA14).